The primary structure comprises 529 residues: Hyaluronidase PH-20 (529 aa).

The signal sequence occupies residues 1–35 (MGAFTFKHSFFGSFVECSGVLQTVFIFLLIPCCLA). 2 cysteine pairs are disulfide-bonded: Cys-59/Cys-351 and Cys-223/Cys-237. N-linked (GlcNAc...) asparagine glycosylation is present at Asn-81. The active-site Proton donor is the Glu-147. N-linked (GlcNAc...) asparagine glycans are attached at residues Asn-165 and Asn-179. Asn-253 and Asn-368 each carry an N-linked (GlcNAc...) asparagine glycan. Intrachain disulfides connect Cys-376/Cys-387, Cys-381/Cys-435, and Cys-437/Cys-464. Asn-401 carries N-linked (GlcNAc...) asparagine glycosylation. Residues 478–502 (DEPPITDDTSQNQDSISDITSSAPP) are disordered. Positions 487–502 (SQNQDSISDITSSAPP) are enriched in polar residues. Ser-492 carries the GPI-anchor amidated serine lipid modification. A propeptide spans 493–529 (ISDITSSAPPSSHILPKDLSWCLFLLSIFSQHWKYLL) (removed in mature form).

This sequence belongs to the glycosyl hydrolase 56 family. In terms of processing, endoproteolysis (toward the C-terminus producing two disulfide-linked fragments) could activate PH-20. Testis.

The protein localises to the cell membrane. The catalysed reaction is Random hydrolysis of (1-&gt;4)-linkages between N-acetyl-beta-D-glucosamine and D-glucuronate residues in hyaluronate.. Involved in sperm-egg adhesion. Upon fertilization sperm must first penetrate a layer of cumulus cells that surrounds the egg before reaching the zona pellucida. The cumulus cells are embedded in a matrix containing hyaluronic acid which is formed prior to ovulation. This protein aids in penetrating the layer of cumulus cells by digesting hyaluronic acid. In Cavia porcellus (Guinea pig), this protein is Hyaluronidase PH-20 (SPAM1).